Here is a 183-residue protein sequence, read N- to C-terminus: MALSAALRLQSLRSLAPHCKLFASALQSHTQQPCRSHRLAPTDDELYQRTTVTRLERDSAEFMFIETYSSQGFIINGDKVVGPCAVIPKAILQWNVGSYKDINLESLSLFHMLSPRIEILVVGTGDRVERLDPNILKFMRQKGVAVEVQDTANACATFNFLVSERRITAAALIPPQLVPKDPL.

The protein belongs to the NDUFAF3 family.

It is found in the nucleus. Its subcellular location is the mitochondrion inner membrane. Essential factor for the assembly of mitochondrial NADH:ubiquinone oxidoreductase complex (complex I). This chain is NADH dehydrogenase [ubiquinone] 1 alpha subcomplex assembly factor 3 (ndufaf3), found in Xenopus tropicalis (Western clawed frog).